Reading from the N-terminus, the 705-residue chain is Choline transporter-like protein 2 (705 aa).

Residues 1–31 (MEDQRKYGAYGTPQKYDPTFKGPIYNRGCTD) lie on the Cytoplasmic side of the membrane. Position 12 is a phosphothreonine (T12). Residues 32-52 (VLCCVLLFLAIVGYVAVGLIA) traverse the membrane as a helical segment. The Extracellular portion of the chain corresponds to 53 to 231 (WTHGDPRKVI…RIFEDYTVSW (179 aa)). 2 N-linked (GlcNAc...) asparagine glycosylation sites follow: N186 and N199. A helical transmembrane segment spans residues 232-252 (YWIVIGLVIAMVLSLLFIILL). The Cytoplasmic portion of the chain corresponds to 253–255 (RFL). A helical membrane pass occupies residues 256 to 276 (AGIMVWVMIVLVILVLGYGIF). Residues 277–314 (HCYMEYARLRGEAGSDISVLDLGFQTDFRVYLHLRQTW) lie on the Extracellular side of the membrane. Residues 315–335 (LAFMIILSILEVIIILLLIFL) form a helical membrane-spanning segment. The Cytoplasmic portion of the chain corresponds to 336 to 363 (RKRILIAIALIKEASRAVGYVMCSLLYP). Residues 364–384 (LVTFFLLCLCIAYWASTAVFL) traverse the membrane as a helical segment. The Extracellular segment spans residues 385 to 455 (STSNEAVYKI…IFNAFMFFWL (71 aa)). N-linked (GlcNAc...) asparagine glycosylation is present at N414. A helical membrane pass occupies residues 456 to 478 (ANFVLALGQVTLAGAFASYYWAL). The Cytoplasmic segment spans residues 479–503 (RKPDDMPAFPLFAAFGRALRYHTGS). The helical transmembrane segment at 504–524 (LAFGSLILAIVQIIRVILEYL) threads the bilayer. The Extracellular segment spans residues 525 to 562 (DQRLKAAENKFAKFLMTCLKCCFWCLEKFIKFLNRNAY). Residues 563–583 (IMIAIYGTNFCTSARNAFFLL) form a helical membrane-spanning segment. The Cytoplasmic segment spans residues 584–598 (MRNIIRVAVLDKVTD). The helical transmembrane segment at 599 to 619 (FLFLLGKLLIVGSVGILAFFF) threads the bilayer. At 620-637 (FTHRIRIVQDTAPPLNYY) the chain is on the extracellular side. A helical transmembrane segment spans residues 638 to 658 (WVPILTVIVGSYLIAHGFFSV). Residues 659–705 (YGMCVDTLFLCFLEDLERNNGSSERPYFMSSTLKKLLNKTNKKPVES) are Cytoplasmic-facing.

Belongs to the CTL (choline transporter-like) family. As to quaternary structure, interacts with COCH. N-glycosylated; contains sialic acid. Not O-glycosylated. As to expression, expressed at high levels in lung, colon and in supporting cells of the inner ear (at protein level). Progressively lower levels in brain, tongue, liver and kidney (at protein level). In the tongue, strongly expressed in epithelial cells and in nerves within the musculature. Within the nerves, expression observed in the perineurial cells of the nerve sheath, in the Schwann cells and myelinated nerve fibers (at protein level). In the kidney, prominent expression in glomeruli in the lining of Bowman's capsule and on the mesangial cells adjacent to the vessels within the glomerulus (at protein level). Strongly expressed on the membranes of splenocytes (at protein level).

The protein resides in the cell membrane. It is found in the mitochondrion outer membrane. The catalysed reaction is choline(out) + n H(+)(in) = choline(in) + n H(+)(out). The enzyme catalyses ethanolamine(out) + n H(+)(in) = ethanolamine(in) + n H(+)(out). In terms of biological role, choline/H+ antiporter, mainly in mitochodria. Also acts as a low-affinity ethanolamine/H+ antiporter, regulating the supply of extracellular ethanolamine (Etn) for the CDP-Etn pathway, redistribute intracellular Etn and balance the CDP-Cho and CDP-Etn arms of the Kennedy pathway. The sequence is that of Choline transporter-like protein 2 (SLC44A2) from Cavia porcellus (Guinea pig).